We begin with the raw amino-acid sequence, 122 residues long: Copper metallothionein 1 (122 aa).

The segment at 1–35 (MACNCPPQKNTACCSTSEAQDKCTCQKGNCECKAC) is cys-rich copper-binding 1. Residues 36–50 (PNSTKTSESGGKAST) are spacer B1. The interval 51–72 (CNCGGSGEACTCPPGQCACDKC) is cys-rich copper-binding 2. Positions 73–81 (PKKAKSVST) are spacer B2. A cys-rich copper-binding 3 region spans residues 82 to 103 (CGCGGSGAACSCPPGKCACDNC). The interval 104-113 (PKQAQEKVSS) is spacer B3. Residues 114 to 122 (CACSGSGAA) form a cys-rich copper-binding 4 region.

This sequence belongs to the metallothionein superfamily.

The protein resides in the cytoplasm. The protein localises to the cell cortex. In terms of biological role, copper metallothionein that protects the cell against copper toxicity by tightly chelating copper ions. Required for antioxidant-mediated growth rescue in the presence of fluconazole. Acts as a critical factors for lung colonization and virulence. This Cryptococcus neoformans var. grubii serotype A (strain H99 / ATCC 208821 / CBS 10515 / FGSC 9487) (Filobasidiella neoformans var. grubii) protein is Copper metallothionein 1.